Consider the following 71-residue polypeptide: Long neurotoxin 1 (71 aa).

Cystine bridges form between Cys3-Cys20, Cys14-Cys41, Cys26-Cys30, Cys45-Cys56, and Cys57-Cys62.

This sequence belongs to the three-finger toxin family. Long-chain subfamily. Type II alpha-neurotoxin sub-subfamily. Expressed by the venom gland.

The protein resides in the secreted. Functionally, binds with high affinity to muscular (alpha-1/CHRNA1) and neuronal (alpha-7/CHRNA7) nicotinic acetylcholine receptor (nAChR) and inhibits acetylcholine from binding to the receptor, thereby impairing neuromuscular and neuronal transmission. This is Long neurotoxin 1 from Naja nivea (Cape cobra).